The sequence spans 405 residues: Arginine biosynthesis bifunctional protein ArgJ (405 aa).

Positions 152, 178, 189, 276, 400, and 405 each coordinate substrate. Thr189 functions as the Nucleophile in the catalytic mechanism.

Belongs to the ArgJ family. As to quaternary structure, heterotetramer of two alpha and two beta chains.

It is found in the cytoplasm. The catalysed reaction is N(2)-acetyl-L-ornithine + L-glutamate = N-acetyl-L-glutamate + L-ornithine. It carries out the reaction L-glutamate + acetyl-CoA = N-acetyl-L-glutamate + CoA + H(+). It functions in the pathway amino-acid biosynthesis; L-arginine biosynthesis; L-ornithine and N-acetyl-L-glutamate from L-glutamate and N(2)-acetyl-L-ornithine (cyclic): step 1/1. Its pathway is amino-acid biosynthesis; L-arginine biosynthesis; N(2)-acetyl-L-ornithine from L-glutamate: step 1/4. Catalyzes two activities which are involved in the cyclic version of arginine biosynthesis: the synthesis of N-acetylglutamate from glutamate and acetyl-CoA as the acetyl donor, and of ornithine by transacetylation between N(2)-acetylornithine and glutamate. The sequence is that of Arginine biosynthesis bifunctional protein ArgJ from Pseudomonas fluorescens (strain ATCC BAA-477 / NRRL B-23932 / Pf-5).